The primary structure comprises 613 residues: MLSRTVFVPLILAFVGVSISAPVSNNNGTDNDESAADQRHIFTVQFNVGTPAPADGDSVTTDGKDSAEKNEAPGDSSDTTEKPGTTDGKDSAEQHGVTTDGKDEAEQHGVTTDGQDSAEKRGEADGAPDKPDTQNGTDDTDSDQETDASHHKTGDSDENKDKPSAEDHTDGNHAGKDSTDSKESPDTTDKPEGPDSDSAPDGDSASAEKTDSDHSPDEDANKSSTEADKDDTSDKDSSQTDEKHDSDASDKDEKHEDKDEKSDEKDSSKDSEDKSQEKSDKSDDGSNSEADEQKESVESKDHDSDSQDSDSAEKKEKHDDKDQDSSDSADSKDSDEDKDKDHSEQKDSEDHEHKEKHTKDKEEHKDSDEGKDDEDKSKSDEHDKDESESKEASKSDESEQEEKKDDKSDSDNSSRDSHSDSDSDSHSDSDSDSHSDSHSDSDSDSHSDSDSDSDSDSDSDSDSDSDSNSRDKDEKKDKSSESRDEDSSDSDSKSNSESSETAEEDTNDDKDSSVEKDKTDSSDSASVEANDSDDEHDDDSKDATPSSEDHTAEKTDEDSHDVSDDDDDIDAHDDEAGVEHGTDEASKPHQEPDHHDDTTHGSDDGRKTSMPIS.

Residues 1–20 (MLSRTVFVPLILAFVGVSIS) form the signal peptide. Residues 42–613 (FTVQFNVGTP…DGRKTSMPIS (572 aa)) are disordered. Composition is skewed to basic and acidic residues over residues 62 to 72 (DGKDSAEKNEA), 117 to 132 (SAEK…DKPD), 147 to 193 (DASH…KPEG), 206 to 284 (SAEK…KSDD), and 291 to 449 (DEQK…HSDS). Acidic residues predominate over residues 450-465 (DSDSDSDSDSDSDSDS). Basic and acidic residues-rich tracts occupy residues 467–482 (SNSR…SSES), 509–521 (DKDS…KTDS), and 538–554 (DDSK…TAEK). Residues 555–573 (TDEDSHDVSDDDDDIDAHD) are compositionally biased toward acidic residues. Residues 574-607 (DEAGVEHGTDEASKPHQEPDHHDDTTHGSDDGRK) show a composition bias toward basic and acidic residues.

It is found in the secreted. In terms of biological role, essential for the formation of otoliths in the inner ear of developing larvae and for the perception of gravity and acceleration. May be one of the organic components of the ortholiths. This is Protein starmaker (stm) from Danio rerio (Zebrafish).